Here is a 568-residue protein sequence, read N- to C-terminus: MFS-type efflux transporter phmH (568 aa).

Over residues 1-11 (MVSGTDTTEVG) the composition is skewed to polar residues. Positions 1–39 (MVSGTDTTEVGATTKAPPSEGTEGILDDHSSNSQPQAEK) are disordered. 7 helical membrane passes run 45–65 (YPLSFWLAFLGLCCTGLVSAL), 101–121 (YVMIGATIIFILGSGLCGGSS), 134–154 (GIGAGGINMLIDMIICDLVPM), 161–181 (IGLLFLFVSLGATIGPFVGGI), 199–219 (IFYINLPFGGVALLLLILFLH), 237–257 (VIGNSILIGATFAILYALTYG), and 268–288 (IAAPLTIGLVGLVAAFFWEMS). N-linked (GlcNAc...) asparagine glycosylation occurs at N303. 6 helical membrane passes run 307-327 (AAAFFISFMCMLLAFWINFFY), 344-364 (VYTLPRAIAFPLFAAVGGAIV), 372-392 (TVHLVSTGIMPLVMGLSSILD), 399-419 (EWVIWQLLFGVSGGMMISTTL), 437-457 (TWSFVRSLGTIWGLSIPAAIF), and 515-535 (IGIVFGGVTFLSVFFEKEIHL). The N-linked (GlcNAc...) asparagine glycan is linked to N563.

The protein belongs to the major facilitator superfamily.

The protein localises to the cell membrane. In terms of biological role, MFS-type efflux transporter; part of the gene cluster that mediates the biosynthesis of thethe mycotoxins phomacins, leucine-derived cytochalasans with potent actin polymerization-inhibitory activities and monocot-specific antigerminative activities. PhmH might be involved in the excretion of phomacins. The chain is MFS-type efflux transporter phmH from Phaeosphaeria nodorum (strain SN15 / ATCC MYA-4574 / FGSC 10173) (Glume blotch fungus).